The chain runs to 388 residues: Succinate--CoA ligase [ADP-forming] subunit beta (388 aa).

ATP is bound by residues lysine 46, 53–55, glutamate 99, cysteine 102, and glutamate 107; that span reads GRG. Positions 199 and 213 each coordinate Mg(2+). Residues asparagine 264 and 321–323 each bind substrate; that span reads GIV.

This sequence belongs to the succinate/malate CoA ligase beta subunit family. As to quaternary structure, heterotetramer of two alpha and two beta subunits. It depends on Mg(2+) as a cofactor.

The catalysed reaction is succinate + ATP + CoA = succinyl-CoA + ADP + phosphate. It catalyses the reaction GTP + succinate + CoA = succinyl-CoA + GDP + phosphate. Its pathway is carbohydrate metabolism; tricarboxylic acid cycle; succinate from succinyl-CoA (ligase route): step 1/1. Functionally, succinyl-CoA synthetase functions in the citric acid cycle (TCA), coupling the hydrolysis of succinyl-CoA to the synthesis of either ATP or GTP and thus represents the only step of substrate-level phosphorylation in the TCA. The beta subunit provides nucleotide specificity of the enzyme and binds the substrate succinate, while the binding sites for coenzyme A and phosphate are found in the alpha subunit. The chain is Succinate--CoA ligase [ADP-forming] subunit beta from Actinobacillus pleuropneumoniae serotype 5b (strain L20).